A 220-amino-acid polypeptide reads, in one-letter code: Probable GTP-binding protein EngB (220 aa).

The EngB-type G domain occupies 26–200 (EGIEIAFAGR…RAKLDEWYAP (175 aa)). GTP-binding positions include 34 to 41 (GRSNTGKS), 61 to 65 (GRTQL), 79 to 82 (DLPG), 146 to 149 (TKAD), and 179 to 181 (FSS). Residues S41 and T63 each contribute to the Mg(2+) site.

It belongs to the TRAFAC class TrmE-Era-EngA-EngB-Septin-like GTPase superfamily. EngB GTPase family. Mg(2+) serves as cofactor.

Necessary for normal cell division and for the maintenance of normal septation. This Vibrio cholerae serotype O1 (strain ATCC 39541 / Classical Ogawa 395 / O395) protein is Probable GTP-binding protein EngB.